The primary structure comprises 500 residues: Glycerol kinase (500 aa).

Residue threonine 17 coordinates ADP. 3 residues coordinate ATP: threonine 17, threonine 18, and serine 19. Threonine 17 lines the sn-glycerol 3-phosphate pocket. Residue arginine 21 participates in ADP binding. Arginine 87, glutamate 88, tyrosine 139, and aspartate 243 together coordinate sn-glycerol 3-phosphate. Positions 87, 88, 139, 243, and 244 each coordinate glycerol. Positions 265 and 308 each coordinate ADP. ATP-binding residues include threonine 265, glycine 308, glutamine 312, and glycine 409. 2 residues coordinate ADP: glycine 409 and asparagine 413.

It belongs to the FGGY kinase family.

It carries out the reaction glycerol + ATP = sn-glycerol 3-phosphate + ADP + H(+). Its pathway is polyol metabolism; glycerol degradation via glycerol kinase pathway; sn-glycerol 3-phosphate from glycerol: step 1/1. Inhibited by fructose 1,6-bisphosphate (FBP). Functionally, key enzyme in the regulation of glycerol uptake and metabolism. Catalyzes the phosphorylation of glycerol to yield sn-glycerol 3-phosphate. This is Glycerol kinase from Pseudomonas fluorescens (strain Pf0-1).